We begin with the raw amino-acid sequence, 387 residues long: Succinate--CoA ligase [ADP-forming] subunit beta (387 aa).

The 228-residue stretch at 9–236 (RDLFESYGVP…AAAADPLEAK (228 aa)) folds into the ATP-grasp domain. ATP is bound by residues Lys45, 52–54 (GRG), Ala94, and Glu99. Mg(2+) contacts are provided by Asn191 and Asp205. Substrate is bound by residues Asn256 and 318–320 (GIT).

Belongs to the succinate/malate CoA ligase beta subunit family. In terms of assembly, heterotetramer of two alpha and two beta subunits. It depends on Mg(2+) as a cofactor.

It catalyses the reaction succinate + ATP + CoA = succinyl-CoA + ADP + phosphate. The catalysed reaction is GTP + succinate + CoA = succinyl-CoA + GDP + phosphate. Its pathway is carbohydrate metabolism; tricarboxylic acid cycle; succinate from succinyl-CoA (ligase route): step 1/1. Succinyl-CoA synthetase functions in the citric acid cycle (TCA), coupling the hydrolysis of succinyl-CoA to the synthesis of either ATP or GTP and thus represents the only step of substrate-level phosphorylation in the TCA. The beta subunit provides nucleotide specificity of the enzyme and binds the substrate succinate, while the binding sites for coenzyme A and phosphate are found in the alpha subunit. The polypeptide is Succinate--CoA ligase [ADP-forming] subunit beta (Clavibacter michiganensis subsp. michiganensis (strain NCPPB 382)).